A 125-amino-acid polypeptide reads, in one-letter code: Small ribosomal subunit protein bS6 (125 aa).

Residues 97–125 (TEASPMKAAKEERKPLAEVENNDFEDAEE) form a disordered region. Residues 104–113 (AAKEERKPLA) are compositionally biased toward basic and acidic residues. Positions 116–125 (ENNDFEDAEE) are enriched in acidic residues.

This sequence belongs to the bacterial ribosomal protein bS6 family.

Binds together with bS18 to 16S ribosomal RNA. In Haemophilus influenzae (strain PittEE), this protein is Small ribosomal subunit protein bS6.